The chain runs to 380 residues: Ceramide synthase 2 (380 aa).

Topologically, residues 1–40 (MLQTLYDYFWWERLWLPVNLTWADLEDKDGRVYAKASDLY) are lumenal. Asparagine 19 carries N-linked (GlcNAc...) asparagine glycosylation. A helical transmembrane segment spans residues 41–61 (ITLPLALLFLVIRYFFELYVA). The homeobox-like stretch occupies residues 67-128 (LLNVKEKTRL…RRRRNQDRPS (62 aa)). The TLC domain occupies 131 to 332 (KKFREASWRF…ILRMAHKFIT (202 aa)). 4 helical membrane-spanning segments follow: residues 140 to 160 (FTYY…KPWF), 175 to 195 (IIPS…SLLF), 209 to 229 (QIIH…ANYV), and 264 to 284 (LFIV…PFWI). A Last loop motif motif is present at residues 291-300 (YPLELYPAFF). The helical transmembrane segment at 304 to 324 (FFNFMMAVLQMLHIFWAYFIL) threads the bilayer. Residues 325-380 (RMAHKFITGKLIEDERSDREETESSEGEETAAGAGAKSRLLANGHPILNNNHPKND) lie on the Cytoplasmic side of the membrane. The interval 340-380 (RSDREETESSEGEETAAGAGAKSRLLANGHPILNNNHPKND) is disordered. Serine 341 bears the Phosphoserine mark. Residues 344–353 (EETESSEGEE) show a composition bias toward acidic residues. Threonine 346 carries the phosphothreonine modification. 2 positions are modified to phosphoserine: serine 348 and serine 349.

In terms of assembly, interacts with ATP6V0C, ASGR1, ASGR2 and SLC22A1/OCT1. Interacts with ELOV1, HSD17B12 and TECR. Interacts with NDUFS2. Interacts with PAQR4; the interaction regulates the stability and activity of CERS2 and is inhibited in presence of ceramides. Acetylated. Deacetylation by SIRT3 increases enzyme activity and promotes mitochondrial ceramide accumulation. In terms of processing, phosphorylated at the C-terminus by CK2, leading to increase the ceramide synthase activity. Broadly expressed, with highest levels in liver and kidney. In brain is detected in neurons, oligodentrocytes, ependymal cells and epithelial cells of the choroid plexus. In kidney is detected in collecting ducts and to a lesser degree in proximal tubules.

The protein localises to the endoplasmic reticulum membrane. It catalyses the reaction a very long-chain fatty acyl-CoA + a sphingoid base = an N-(very-long-chain fatty acyl)-sphingoid base + CoA + H(+). The catalysed reaction is docosanoyl-CoA + sphinganine = N-docosanoylsphinganine + CoA + H(+). The enzyme catalyses tetracosanoyl-CoA + sphinganine = N-tetracosanoylsphinganine + CoA + H(+). It carries out the reaction hexacosanoyl-CoA + sphinganine = N-hexacosanoylsphinganine + CoA + H(+). It catalyses the reaction (15Z)-tetracosenoyl-CoA + sphinganine = N-(15Z-tetracosenoyl)-sphinganine + CoA + H(+). The catalysed reaction is 2-hydroxytetracosanoyl-CoA + sphinganine = N-(2-hydroxytetracosanoyl)-sphinganine + CoA + H(+). The enzyme catalyses 2-hydroxydocosanoyl-CoA + sphinganine = N-(2-hydroxydocosanoyl)-sphinganine + CoA + H(+). It carries out the reaction 2-hydroxytetracosenoyl-CoA + sphinganine = N-(2-hydroxytetracosenoyl)-sphinganine + CoA + H(+). It catalyses the reaction tetracosenoyl-CoA + sphinganine = an N-tetracosenoylsphinganine + CoA + H(+). The catalysed reaction is hexacosenoyl-CoA + sphinganine = N-hexacosenoylsphinganine + CoA + H(+). The enzyme catalyses tetracosanoyl-CoA + sphing-4-enine = N-tetracosanoyl-sphing-4-enine + CoA + H(+). It carries out the reaction tetracosenoyl-CoA + sphing-4-enine = N-(tetracosenoyl)-sphing-4-enine + CoA + H(+). It catalyses the reaction heptadecasphing-4-enine + tetracosanoyl-CoA = N-tetracosanoyl-heptadecasphing-4-enine + CoA + H(+). The catalysed reaction is a fatty acyl-CoA + sphing-4-enine = an N-acylsphing-4-enine + CoA + H(+). The enzyme catalyses sphing-4-enine + hexadecanoyl-CoA = N-hexadecanoylsphing-4-enine + CoA + H(+). It carries out the reaction sphing-4-enine + octadecanoyl-CoA = N-octadecanoylsphing-4-enine + CoA + H(+). It catalyses the reaction eicosanoyl-CoA + sphing-4-enine = N-eicosanoyl-sphing-4-enine + CoA + H(+). The catalysed reaction is sphinganine + hexadecanoyl-CoA = N-hexadecanoylsphinganine + CoA + H(+). The enzyme catalyses sphinganine + octadecanoyl-CoA = N-(octadecanoyl)-sphinganine + CoA + H(+). It carries out the reaction sphinganine + (9Z)-octadecenoyl-CoA = N-(9Z-octadecenoyl)-sphinganine + CoA + H(+). It catalyses the reaction eicosanoyl-CoA + sphinganine = N-eicosanoylsphinganine + CoA + H(+). Its pathway is lipid metabolism; sphingolipid metabolism. Its activity is regulated as follows. Ceramide synthase activity is inhibited by sphingosine-1-phosphate. Ceramide synthase that catalyzes the transfer of the acyl chain from acyl-CoA to a sphingoid base, with high selectivity toward very-long-chain fatty acyl-CoA (chain length C22-C27). N-acylates sphinganine and sphingosine bases to form dihydroceramides and ceramides in de novo synthesis and salvage pathways, respectively. Plays a non-redundant role in the synthesis of ceramides with very-long-chain fatty acids in kidney, liver and brain. Regulates the abundance of myelin-specific sphingolipids galactosylceramide and sulfatide that affects myelin sheath architecture and motor neuron functions. The polypeptide is Ceramide synthase 2 (Mus musculus (Mouse)).